Here is a 411-residue protein sequence, read N- to C-terminus: tRNA (uracil(54)-C(5))-methyltransferase (411 aa).

The [4Fe-4S] cluster site is built by Cys-62, Cys-68, Cys-71, and Cys-138. S-adenosyl-L-methionine is bound by residues Gln-254, Tyr-280, Thr-285, Asp-301 to Ser-302, Asp-328, and Asp-342. Cys-369 (nucleophile) is an active-site residue. Glu-402 serves as the catalytic Proton acceptor.

It belongs to the class I-like SAM-binding methyltransferase superfamily. RNA M5U methyltransferase family.

It catalyses the reaction uridine(54) in tRNA + S-adenosyl-L-methionine = 5-methyluridine(54) in tRNA + S-adenosyl-L-homocysteine + H(+). Catalyzes the formation of 5-methyl-uridine at position 54 (m5U54) in tRNA. This chain is tRNA (uracil(54)-C(5))-methyltransferase, found in Pyrococcus furiosus (strain ATCC 43587 / DSM 3638 / JCM 8422 / Vc1).